Consider the following 99-residue polypeptide: MANTKSAKKKIKVIRRRTIENKIQKFKMKKAIKEVKKALLAGDIEKAKELYSKAAKLIDQTAAKGVIHKNNASRKKSRLMKLINKYAALSTPQPEKKAQ.

The protein belongs to the bacterial ribosomal protein bS20 family.

Binds directly to 16S ribosomal RNA. The polypeptide is Small ribosomal subunit protein bS20 (Caldicellulosiruptor saccharolyticus (strain ATCC 43494 / DSM 8903 / Tp8T 6331)).